Here is a 325-residue protein sequence, read N- to C-terminus: Cytochrome c biogenesis protein CcsA (325 aa).

The next 8 helical transmembrane spans lie at 14-34, 36-56, 68-88, 97-117, 142-162, 233-253, 260-280, and 294-314; these read TFAI…FPNL, GLPA…AALL, ISNL…IHLL, LVGA…AFTL, VMMV…AFLV, VIGL…VWAN, WSWD…AAYL, and AILA…VNLL.

This sequence belongs to the CcmF/CycK/Ccl1/NrfE/CcsA family. May interact with ccs1.

Its subcellular location is the cellular thylakoid membrane. Its function is as follows. Required during biogenesis of c-type cytochromes (cytochrome c6 and cytochrome f) at the step of heme attachment. This chain is Cytochrome c biogenesis protein CcsA, found in Synechococcus sp. (strain ATCC 27144 / PCC 6301 / SAUG 1402/1) (Anacystis nidulans).